Here is a 272-residue protein sequence, read N- to C-terminus: Putative hydro-lyase Rpal_1947 (272 aa).

Belongs to the D-glutamate cyclase family.

This is Putative hydro-lyase Rpal_1947 from Rhodopseudomonas palustris (strain TIE-1).